A 423-amino-acid polypeptide reads, in one-letter code: N-acylneuraminate cytidylyltransferase B (423 aa).

Positions 30, 40, 88, 97, 99, and 120 each coordinate substrate. Arg178 is a catalytic residue.

The protein belongs to the CMP-NeuNAc synthase family. As to quaternary structure, homotetramer.

It is found in the cytoplasm. The enzyme catalyses an N-acylneuraminate + CTP = a CMP-N-acyl-beta-neuraminate + diphosphate. The protein operates within amino-sugar metabolism; N-acetylneuraminate metabolism. In terms of biological role, catalyzes the activation of 2-keto-3-deoxy-D-glycero-D-galacto-nononic acid (KDN) to cytidine 5'-monophosphate 2-keto-3-deoxy-D-glycero-D-galacto-nononic acid (CMP-KDN), a substrate required for the addition of sialic acid. Also has weak activity towards N-acetylneuraminic acid (NeuNAc) and N-glycolylneuraminic acid (Neu5Gc). In Danio rerio (Zebrafish), this protein is N-acylneuraminate cytidylyltransferase B.